A 618-amino-acid chain; its full sequence is Dihydroxy-acid dehydratase (618 aa).

Asp81 provides a ligand contact to Mg(2+). Residue Cys122 coordinates [2Fe-2S] cluster. Residues Asp123 and Lys124 each coordinate Mg(2+). Position 124 is an N6-carboxylysine (Lys124). Residue Cys195 participates in [2Fe-2S] cluster binding. Glu493 contributes to the Mg(2+) binding site. Ser519 (proton acceptor) is an active-site residue.

The protein belongs to the IlvD/Edd family. In terms of assembly, homodimer. It depends on [2Fe-2S] cluster as a cofactor. The cofactor is Mg(2+).

It carries out the reaction (2R)-2,3-dihydroxy-3-methylbutanoate = 3-methyl-2-oxobutanoate + H2O. The enzyme catalyses (2R,3R)-2,3-dihydroxy-3-methylpentanoate = (S)-3-methyl-2-oxopentanoate + H2O. It functions in the pathway amino-acid biosynthesis; L-isoleucine biosynthesis; L-isoleucine from 2-oxobutanoate: step 3/4. The protein operates within amino-acid biosynthesis; L-valine biosynthesis; L-valine from pyruvate: step 3/4. Its function is as follows. Functions in the biosynthesis of branched-chain amino acids. Catalyzes the dehydration of (2R,3R)-2,3-dihydroxy-3-methylpentanoate (2,3-dihydroxy-3-methylvalerate) into 2-oxo-3-methylpentanoate (2-oxo-3-methylvalerate) and of (2R)-2,3-dihydroxy-3-methylbutanoate (2,3-dihydroxyisovalerate) into 2-oxo-3-methylbutanoate (2-oxoisovalerate), the penultimate precursor to L-isoleucine and L-valine, respectively. This chain is Dihydroxy-acid dehydratase, found in Shewanella amazonensis (strain ATCC BAA-1098 / SB2B).